Reading from the N-terminus, the 291-residue chain is Protease HtpX (291 aa).

2 helical membrane-spanning segments follow: residues 4-24 (IVIF…LLTC) and 37-57 (IISG…SKFI). Position 139 (histidine 139) interacts with Zn(2+). The active site involves glutamate 140. Histidine 143 contacts Zn(2+). 2 helical membrane-spanning segments follow: residues 147–167 (GDMV…IFIS) and 195–215 (IVST…VLWF). Glutamate 220 serves as a coordination point for Zn(2+).

Belongs to the peptidase M48B family. Requires Zn(2+) as cofactor.

It localises to the cell membrane. The polypeptide is Protease HtpX (Baumannia cicadellinicola subsp. Homalodisca coagulata).